Reading from the N-terminus, the 226-residue chain is Lipoprotein-releasing system ATP-binding protein LolD 1 (226 aa).

The region spanning leucine 5–alanine 225 is the ABC transporter domain. An ATP-binding site is contributed by glycine 42 to serine 49.

This sequence belongs to the ABC transporter superfamily. Lipoprotein translocase (TC 3.A.1.125) family. In terms of assembly, the complex is composed of two ATP-binding proteins (LolD) and two transmembrane proteins (LolC and LolE).

It localises to the cell inner membrane. Functionally, part of the ABC transporter complex LolCDE involved in the translocation of mature outer membrane-directed lipoproteins, from the inner membrane to the periplasmic chaperone, LolA. Responsible for the formation of the LolA-lipoprotein complex in an ATP-dependent manner. This Rhodopseudomonas palustris (strain ATCC BAA-98 / CGA009) protein is Lipoprotein-releasing system ATP-binding protein LolD 1.